Reading from the N-terminus, the 361-residue chain is D-malate dehydrogenase [decarboxylating] (361 aa).

Mn(2+)-binding residues include aspartate 224, aspartate 248, and aspartate 252.

The protein belongs to the isocitrate and isopropylmalate dehydrogenases family. Requires Mg(2+) as cofactor. Mn(2+) serves as cofactor.

It is found in the cytoplasm. It catalyses the reaction (R)-malate + NAD(+) = pyruvate + CO2 + NADH. Its function is as follows. Catalyzes the NAD(+)-dependent oxidative decarboxylation of D-malate into pyruvate. Is essential for aerobic growth on D-malate as the sole carbon source. But is not required for anaerobic D-malate utilization, although DmlA is expressed and active in those conditions. Appears to be not able to use L-tartrate as a substrate for dehydrogenation instead of D-malate. The polypeptide is D-malate dehydrogenase [decarboxylating] (dmlA) (Escherichia coli (strain K12)).